The following is a 538-amino-acid chain: ATP synthase subunit beta, mitochondrial (538 aa).

215–222 (GGAGVGKT) provides a ligand contact to ATP.

Belongs to the ATPase alpha/beta chains family. As to quaternary structure, subunit of the F-type ATPase which has 2 components, CF(1) - the catalytic core - and CF(0) - the membrane proton channel. Interacts (via N-terminus) with lov-1 (via PLAT domain). In terms of tissue distribution, expressed in three categories of adult male sensory neurons: tail ray B neurons, HOB hook neuron and head cephalic (CEM) neurons.

Its subcellular location is the cell projection. It localises to the cilium. The protein resides in the mitochondrion. The protein localises to the mitochondrion inner membrane. The catalysed reaction is ATP + H2O + 4 H(+)(in) = ADP + phosphate + 5 H(+)(out). Functionally, mitochondrial membrane ATP synthase (F(1)F(0) ATP synthase or Complex V) produces ATP from ADP in the presence of a proton gradient across the membrane which is generated by electron transport complexes of the respiratory chain. F-type ATPases consist of two structural domains, F(1) - containing the extramembraneous catalytic core, and F(0) - containing the membrane proton channel, linked together by a central stalk and a peripheral stalk. During catalysis, ATP synthesis in the catalytic domain of F(1) is coupled via a rotary mechanism of the central stalk subunits to proton translocation. Subunits alpha and beta form the catalytic core in F(1). Rotation of the central stalk against the surrounding subunits leads to hydrolysis of ATP in three separate catalytic sites on the beta subunits. Required during male mating behavior for the response to hermaphrodite contact, acting with lov-1 and pkd-2. May be involved in polycystin signaling. This is ATP synthase subunit beta, mitochondrial from Caenorhabditis elegans.